An 84-amino-acid chain; its full sequence is ATP synthase subunit c (84 aa).

2 helical membrane passes run 9–29 and 54–74; these read IIGA…GFAI and IVAG…LLFI.

The protein belongs to the ATPase C chain family. In terms of assembly, F-type ATPases have 2 components, F(1) - the catalytic core - and F(0) - the membrane proton channel. F(1) has five subunits: alpha(3), beta(3), gamma(1), delta(1), epsilon(1). F(0) has three main subunits: a(1), b(2) and c(10-14). The alpha and beta chains form an alternating ring which encloses part of the gamma chain. F(1) is attached to F(0) by a central stalk formed by the gamma and epsilon chains, while a peripheral stalk is formed by the delta and b chains.

The protein resides in the cell inner membrane. F(1)F(0) ATP synthase produces ATP from ADP in the presence of a proton or sodium gradient. F-type ATPases consist of two structural domains, F(1) containing the extramembraneous catalytic core and F(0) containing the membrane proton channel, linked together by a central stalk and a peripheral stalk. During catalysis, ATP synthesis in the catalytic domain of F(1) is coupled via a rotary mechanism of the central stalk subunits to proton translocation. Its function is as follows. Key component of the F(0) channel; it plays a direct role in translocation across the membrane. A homomeric c-ring of between 10-14 subunits forms the central stalk rotor element with the F(1) delta and epsilon subunits. The protein is ATP synthase subunit c of Glaesserella parasuis serovar 5 (strain SH0165) (Haemophilus parasuis).